The following is a 418-amino-acid chain: MAQESVMFSDVSVDFSQEEWECLNDDQRDLYRDVMLENYSNLVSMGHSISKPNVISYLEQGKEPWLVDRELTRGQWPVLESRCETKKLFLKKEIYEIESTQWEIMEKLTRHDFQCSSFRDDWECNRQFKKELGSQGGHFNQLVFTHEDLPTLSHHPSFTLQQIINSKKKFCASKEYRKTFRHGSQFATHEIIHTTEKPYECKECGKSFRHPSRLTHHQKIHTGKKPFECKECGKTFICGSDLTRHHRIHTGEKPYECKECGKAFSSGSNFTRHQRIHTGEKPYECKECGKAFSSGSNFTQHQRIHTGEKPYECKECGNAFSQSSQLIKHQRIHTGEKPYECKECEKAFRSGSDLTRHQRIHTGEKPYECKICGKAYSQSSQLISHHRIHTSEKPYEYRECGKNFNYDPQLIQHQNLYW.

Positions 6–77 constitute a KRAB domain; that stretch reads VMFSDVSVDF…DRELTRGQWP (72 aa). The segment at 169–193 adopts a C2H2-type 1; degenerate zinc-finger fold; sequence KFCASKEYRKTFRHGSQFATHEIIH. C2H2-type zinc fingers lie at residues 199-221, 227-249, 255-277, 283-305, 311-333, 339-361, and 367-389; these read YECK…QKIH, FECK…HRIH, YECK…QRIH, and YECK…HRIH. Glycyl lysine isopeptide (Lys-Gly) (interchain with G-Cter in SUMO2) cross-links involve residues Lys-314 and Lys-328.

Belongs to the krueppel C2H2-type zinc-finger protein family.

The protein localises to the nucleus. Its function is as follows. May be involved in transcriptional regulation. The chain is Zinc finger protein 566 (ZNF566) from Pan troglodytes (Chimpanzee).